A 90-amino-acid polypeptide reads, in one-letter code: Phosphocarrier protein NPr (90 aa).

Residues 2-90 (TQYRRVAIKN…ALFESGFDED (89 aa)) enclose the HPr domain. The active-site Pros-phosphohistidine intermediate is histidine 16.

The protein belongs to the HPr family.

It is found in the cytoplasm. In terms of biological role, component of the phosphoenolpyruvate-dependent nitrogen-metabolic phosphotransferase system (nitrogen-metabolic PTS), that seems to be involved in regulating nitrogen metabolism. The phosphoryl group from phosphoenolpyruvate (PEP) is transferred to the phosphoryl carrier protein NPr by enzyme I-Ntr. Phospho-NPr then transfers it to EIIA-Ntr. Could function in the transcriptional regulation of sigma-54 dependent operons in conjunction with the NPr (PtsO) and EIIA-Ntr (PtsN) proteins. The chain is Phosphocarrier protein NPr (ptsO) from Proteus mirabilis (strain HI4320).